Consider the following 95-residue polypeptide: MLNEIIEKLFYRNNPKSREEVKRRLKLVIAHDRADLNPEIIQAMRKDIIDVVSRYVEIDDTDSEFLLENNQRATSLVANLPIRRIKAKPTQDQED.

The protein belongs to the MinE family.

Prevents the cell division inhibition by proteins MinC and MinD at internal division sites while permitting inhibition at polar sites. This ensures cell division at the proper site by restricting the formation of a division septum at the midpoint of the long axis of the cell. In Trichodesmium erythraeum (strain IMS101), this protein is Cell division topological specificity factor.